Here is a 415-residue protein sequence, read N- to C-terminus: Prostacyclin receptor (415 aa).

The segment at 1–21 is disordered; sequence MMASDGHPGPPSVTPGSPLSA. The Extracellular portion of the chain corresponds to 1–44; the sequence is MMASDGHPGPPSVTPGSPLSAGGREWQGMAGSCWNITYVQDSVG. 2 cysteine pairs are disulfide-bonded: cysteine 33–cysteine 193 and cysteine 120–cysteine 198. N-linked (GlcNAc...) asparagine glycosylation occurs at asparagine 35. A helical transmembrane segment spans residues 45–66; that stretch reads PATSTLMFVAGVVGNGLALGIL. The Cytoplasmic portion of the chain corresponds to 67–79; the sequence is GARRRSHPSAFAV. Residues 80–104 form a helical membrane-spanning segment; it reads LVTGLAVTDLLGTCFLSPAVFVAYA. Residues 105–122 are Extracellular-facing; it reads RNSSLLGLAHGGTMLCDT. The helical transmembrane segment at 123 to 143 threads the bilayer; that stretch reads FAFAMTFFGLASTLILFAMAV. Over 144 to 162 the chain is Cytoplasmic; it reads ERCLALSHPYLYAQLDGPR. A helical transmembrane segment spans residues 163 to 186; it reads CARFALPSIYAFCCLFCSLPLLGL. The Extracellular portion of the chain corresponds to 187–215; sequence GEHQQYCPGSWCFIRMRSAQPGGCAFSLA. A helical membrane pass occupies residues 216–236; sequence YASLMALLVTSIFFCNGSVTL. Topologically, residues 237–263 are cytoplasmic; sequence SLYHMYRQQRRHHGSFVPTSRAREDEV. Residues 264–288 form a helical membrane-spanning segment; sequence YHLILLALMTVIMAVCSLPLMIRGF. The Extracellular portion of the chain corresponds to 289-301; sequence TQAIAPDSREMGD. A helical membrane pass occupies residues 302 to 322; that stretch reads LLAFRFNAFNPILDPWVFILF. Over 323–415 the chain is Cytoplasmic; that stretch reads RKAVFQRLKF…SEAIAACSLC (93 aa). Residues 349–370 form a disordered region; it reads PLSRPASGRRDPPAPTSLQAKE. Serine 365 carries the post-translational modification Phosphoserine. Cysteine 412 bears the Cysteine methyl ester mark. Cysteine 412 carries the S-farnesyl cysteine lipid modification. Positions 413-415 are cleaved as a propeptide — removed in mature form; sequence SLC.

The protein belongs to the G-protein coupled receptor 1 family. Interacts (non-isoprenylated C-terminus) with PDZK1. Post-translationally, isoprenylation does not influence ligand binding but is required for efficient coupling to the effectors adenylyl cyclase and phospholipase C.

Its subcellular location is the cell membrane. Its function is as follows. Receptor for prostacyclin (prostaglandin I2 or PGI2). The activity of this receptor is mediated by G(s) proteins which activate adenylate cyclase. In Mus musculus (Mouse), this protein is Prostacyclin receptor (Ptgir).